A 485-amino-acid polypeptide reads, in one-letter code: UDP-N-acetylmuramoyl-L-alanyl-D-glutamate--2,6-diaminopimelate ligase (485 aa).

Residue Ser28 participates in UDP-N-acetyl-alpha-D-muramoyl-L-alanyl-D-glutamate binding. 108–114 (GTNGKTS) is a binding site for ATP. Residues Asn147, 148 to 149 (TT), Ser175, and Arg183 each bind UDP-N-acetyl-alpha-D-muramoyl-L-alanyl-D-glutamate. At Lys215 the chain carries N6-carboxylysine. Meso-2,6-diaminopimelate-binding positions include Arg374, 398-401 (DNPR), Gly449, and Glu453. Residues 398–401 (DNPR) carry the Meso-diaminopimelate recognition motif motif.

It belongs to the MurCDEF family. MurE subfamily. The cofactor is Mg(2+). Post-translationally, carboxylation is probably crucial for Mg(2+) binding and, consequently, for the gamma-phosphate positioning of ATP.

It localises to the cytoplasm. It catalyses the reaction UDP-N-acetyl-alpha-D-muramoyl-L-alanyl-D-glutamate + meso-2,6-diaminopimelate + ATP = UDP-N-acetyl-alpha-D-muramoyl-L-alanyl-gamma-D-glutamyl-meso-2,6-diaminopimelate + ADP + phosphate + H(+). It participates in cell wall biogenesis; peptidoglycan biosynthesis. Its function is as follows. Catalyzes the addition of meso-diaminopimelic acid to the nucleotide precursor UDP-N-acetylmuramoyl-L-alanyl-D-glutamate (UMAG) in the biosynthesis of bacterial cell-wall peptidoglycan. The sequence is that of UDP-N-acetylmuramoyl-L-alanyl-D-glutamate--2,6-diaminopimelate ligase from Fusobacterium nucleatum subsp. nucleatum (strain ATCC 25586 / DSM 15643 / BCRC 10681 / CIP 101130 / JCM 8532 / KCTC 2640 / LMG 13131 / VPI 4355).